A 281-amino-acid chain; its full sequence is 2,3,4,5-tetrahydropyridine-2,6-dicarboxylate N-succinyltransferase (281 aa).

Substrate contacts are provided by arginine 108 and aspartate 145.

This sequence belongs to the transferase hexapeptide repeat family. As to quaternary structure, homotrimer.

It localises to the cytoplasm. The enzyme catalyses (S)-2,3,4,5-tetrahydrodipicolinate + succinyl-CoA + H2O = (S)-2-succinylamino-6-oxoheptanedioate + CoA. The protein operates within amino-acid biosynthesis; L-lysine biosynthesis via DAP pathway; LL-2,6-diaminopimelate from (S)-tetrahydrodipicolinate (succinylase route): step 1/3. In Rhodopseudomonas palustris (strain BisB5), this protein is 2,3,4,5-tetrahydropyridine-2,6-dicarboxylate N-succinyltransferase.